Reading from the N-terminus, the 347-residue chain is Ribosomal RNA small subunit methyltransferase C (347 aa).

This sequence belongs to the methyltransferase superfamily. RsmC family. In terms of assembly, monomer.

It is found in the cytoplasm. It catalyses the reaction guanosine(1207) in 16S rRNA + S-adenosyl-L-methionine = N(2)-methylguanosine(1207) in 16S rRNA + S-adenosyl-L-homocysteine + H(+). Functionally, specifically methylates the guanine in position 1207 of 16S rRNA in the 30S particle. The chain is Ribosomal RNA small subunit methyltransferase C from Shewanella baltica (strain OS185).